The sequence spans 312 residues: Malate dehydrogenase (312 aa).

Residues 7-13 and aspartate 34 each bind NAD(+); that span reads GAAGGIG. Arginine 81 and arginine 87 together coordinate substrate. Residues asparagine 94 and 117 to 119 each bind NAD(+); that span reads ITN. Residues asparagine 119 and arginine 153 each contribute to the substrate site. Residue histidine 177 is the Proton acceptor of the active site. Methionine 227 serves as a coordination point for NAD(+).

The protein belongs to the LDH/MDH superfamily. MDH type 1 family. Homodimer.

It catalyses the reaction (S)-malate + NAD(+) = oxaloacetate + NADH + H(+). Its function is as follows. Catalyzes the reversible oxidation of malate to oxaloacetate. The sequence is that of Malate dehydrogenase from Serratia proteamaculans (strain 568).